The following is a 398-amino-acid chain: Interleukin-1 receptor type 2 (398 aa).

Positions 1-13 are cleaved as a signal peptide; sequence MLRLYVLVMGVSA. The Extracellular segment spans residues 14-343; sequence FTLQPAAHTG…FQTLRTTVKE (330 aa). Ig-like C2-type domains are found at residues 18–124, 134–223, and 237–349; these read PAAH…IELR, PFIS…ITRS, and PVII…STFS. 3 disulfides stabilise this stretch: C28–C116, C50–C108, and C152–C207. Residues N66, N72, and N112 are each glycosylated (N-linked (GlcNAc...) asparagine). Residues N219 and N277 are each glycosylated (N-linked (GlcNAc...) asparagine). A disulfide bond links C258 and C326. Positions 329-343 are contains proteolytic cleavage site; sequence HNTLSFQTLRTTVKE. A helical transmembrane segment spans residues 344–369; sequence ASSTFSWGIVLAPLSLAFLVLGGIWM. Over 370 to 398 the chain is Cytoplasmic; it reads HRRCKHRTGKADGLTVLWPHHQDFQSYPK.

It belongs to the interleukin-1 receptor family. In terms of assembly, associates with IL1RAP to form a non-signaling interleukin-1 receptor complex. A soluble form (sIL1R2) can also be produced by proteolytic cleavage at the cell surface (shedding) involving a metalloproteinase; hovever, several sIL1R2 forms ranging from 45 and 60 kDa are reported.

The protein resides in the secreted. It localises to the cell membrane. Non-signaling receptor for IL1A, IL1B and IL1RN. Reduces IL1B activities. Serves as a decoy receptor by competitive binding to IL1B and preventing its binding to IL1R1. Also modulates cellular response through non-signaling association with IL1RAP after binding to IL1B. IL1R2 (membrane and secreted forms) preferentially binds IL1B and poorly IL1A and IL1RN. The secreted IL1R2 recruits secreted IL1RAP with high affinity; this complex formation may be the dominant mechanism for neutralization of IL1B by secreted/soluble receptors. This is Interleukin-1 receptor type 2 (IL1R2) from Homo sapiens (Human).